The following is a 346-amino-acid chain: MATQGVLAKYRLPPLPTIGEIIKLFNLRAEKQLSQNFLLDLKLTDKIVRKAGNLQNAYVCEVGPGPGGITRSILNAGVEELLVVEKDTRFIPGLKMLNEASSGKVQIVHGDILTYRMDRAFPKHLKKPWDDDPPNVHIIGNLPFSVSTPLIIKWLEQLADRTGPFTYGRTQMTLTFQKEVAERLTASTSSKQRSRLSIMAQNLCNVKNCFTIPGRAFVPKPEVDVGVVHFTPFIQPKIEQPFKVVEKVVRSVFQFRRKYCHHGVSILFPEESRLKCTEQMLRLADVDPTLRPTELTMTHFKKLCNVYREMCDQNPNLFAYNFREELRMRKLQGKTTEEGEEDDLQR.

A mitochondrion-targeting transit peptide spans 1–27 (MATQGVLAKYRLPPLPTIGEIIKLFNL). The S-adenosyl-L-methionine site is built by Asn36, Leu38, Gly63, Glu85, Lys86, Asp111, Ile112, and Asn141.

This sequence belongs to the class I-like SAM-binding methyltransferase superfamily. rRNA adenine N(6)-methyltransferase family. KsgA subfamily.

It is found in the mitochondrion. The catalysed reaction is adenosine(N)/adenosine(N+1) in rRNA + 4 S-adenosyl-L-methionine = N(6)-dimethyladenosine(N)/N(6)-dimethyladenosine(N+1) in rRNA + 4 S-adenosyl-L-homocysteine + 4 H(+). In terms of biological role, mitochondrial methyltransferase which uses S-adenosyl methionine to dimethylate two highly conserved adjacent adenosine residues (A1583 and A1584) within the loop of helix 45 at the 3-prime end of 12S rRNA, thereby regulating the assembly or stability of the small subunit of the mitochondrial ribosome. Also required for basal transcription of mitochondrial DNA, probably via its interaction with POLRMT and TFAM. Stimulates transcription independently of the methyltransferase activity. In Xenopus tropicalis (Western clawed frog), this protein is Dimethyladenosine transferase 1, mitochondrial (tfb1m).